The chain runs to 300 residues: Sodium/potassium/calcium exchanger 1 (300 aa).

A disordered region spans residues 1–251 (DPGSQGVGAE…ENEQPLSLEW (251 aa)). Composition is skewed to acidic residues over residues 92-102 (GEVEGDEDEGE), 109-119 (GEVEGDEDEGE), 126-136 (GEVEGDEDEGE), 158-175 (GEVEGEDGEVEGGEDEGE), and 215-244 (GDSEDEEEEDEEEDEEEEEEEEEEEEEENE). A helical transmembrane segment spans residues 259–275 (AIYLFLLPIVFPLWLTV).

The protein belongs to the Ca(2+):cation antiporter (CaCA) (TC 2.A.19) family. SLC24A subfamily. Post-translationally, the uncleaved signal sequence is required for efficient membrane targeting and proper membrane integration and topology.

Its subcellular location is the cell membrane. The catalysed reaction is Ca(2+)(out) + K(+)(out) + 4 Na(+)(in) = Ca(2+)(in) + K(+)(in) + 4 Na(+)(out). Calcium, potassium:sodium antiporter that transports 1 Ca(2+) and 1 K(+) in exchange for 4 Na(+). Critical component of the visual transduction cascade, controlling the calcium concentration of outer segments during light and darkness. Light causes a rapid lowering of cytosolic free calcium in the outer segment of both retinal rod and cone photoreceptors and the light-induced lowering of calcium is caused by extrusion via this protein which plays a key role in the process of light adaptation. The sequence is that of Sodium/potassium/calcium exchanger 1 (SLC24A1) from Bison bison (American bison).